The chain runs to 433 residues: Ribonuclease T2-like (433 aa).

4 disulfide bridges follow: C28–C47, C36–C95, C46–C171, and C103–C163. 2 N-linked (GlcNAc...) asparagine glycosylation sites follow: N38 and N71. Active-site residues include H88, E156, and H160. Residues N221 and N263 are each glycosylated (N-linked (GlcNAc...) asparagine). C247 and C283 form a disulfide bridge.

This sequence belongs to the RNase T2 family.

It localises to the vacuole lumen. Its subcellular location is the cytoplasm. The catalysed reaction is a ribonucleotidyl-ribonucleotide-RNA + H2O = a 3'-end 3'-phospho-ribonucleotide-RNA + a 5'-end dephospho-ribonucleoside-RNA + H(+). Functionally, rnase which modulates cell survival under stress conditions. Released from the vacuole to the cytoplasm during stress to promote tRNA and rRNA cleavage and to activate separately a downstream pathway that promotes cell death. Involved in cell size, vacuolar morphology and growth at high temperatures and high salt concentration. In Candida glabrata (strain ATCC 2001 / BCRC 20586 / JCM 3761 / NBRC 0622 / NRRL Y-65 / CBS 138) (Yeast), this protein is Ribonuclease T2-like (RNY1).